Reading from the N-terminus, the 63-residue chain is DNA gyrase inhibitor YacG (63 aa).

4 residues coordinate Zn(2+): C10, C13, C29, and C33.

It belongs to the DNA gyrase inhibitor YacG family. As to quaternary structure, interacts with GyrB. Zn(2+) is required as a cofactor.

Inhibits all the catalytic activities of DNA gyrase by preventing its interaction with DNA. Acts by binding directly to the C-terminal domain of GyrB, which probably disrupts DNA binding by the gyrase. The sequence is that of DNA gyrase inhibitor YacG from Chromobacterium violaceum (strain ATCC 12472 / DSM 30191 / JCM 1249 / CCUG 213 / NBRC 12614 / NCIMB 9131 / NCTC 9757 / MK).